Reading from the N-terminus, the 911-residue chain is Ribonuclease J (911 aa).

The transit peptide at 1–70 directs the protein to the chloroplast; that stretch reads MMKPASLQGF…VTSAPASGTS (70 aa). The interval 58–90 is disordered; the sequence is SCSVTSAPASGTSSSSKTPRRRSGRLEGVGKSM. Low complexity predominate over residues 63-74; it reads SAPASGTSSSSK. Residues His175, His177, Asp179, His180, His245, and Asp267 each contribute to the Zn(2+) site. Substrate is bound by residues 336 to 338 and 468 to 472; these read ASN and HTSGH. His494 contributes to the Zn(2+) binding site. Disordered regions lie at residues 695-723 and 735-824; these read VEGN…TLED and EETA…WKPE. Composition is skewed to basic and acidic residues over residues 713–722 and 783–795; these read SPKEVDRTLE and ADTE…KENS. The segment covering 796–806 has biased composition (acidic residues); it reads RDDDELADASD. Residues 813 to 877 enclose the Myb-like domain; it reads PKRVRKNKWK…QCKSLWASLI (65 aa).

It belongs to the metallo-beta-lactamase superfamily. RNA-metabolizing metallo-beta-lactamase-like family. Bacterial RNase J subfamily. Homodimer. May be a subunit of the RNA degradosome. It depends on Zn(2+) as a cofactor. Moslty expressed in inflorescences, seedlings, leaves, flowers and flower buds, and, to a lower extent, in stems, siliques and roots.

The protein resides in the plastid. Its subcellular location is the chloroplast. In terms of biological role, essential protein required during embryogenesis, especially in initiating and maintaining the organization of shoot apical meristems (SAMs), cotyledons, and hypocotyls. Involved in auxin-mediated pathways during embryogenesis. RNase that has both endonuclease and 5'-3' exonuclease activities. Involved in RNA surveillance to prevent overaccumulation of antisense RNA. Probably involved in maturation of rRNA and in some organisms also mRNA maturation and/or decay. In Arabidopsis thaliana (Mouse-ear cress), this protein is Ribonuclease J.